The following is a 771-amino-acid chain: Kinase suppressor of Ras A (771 aa).

The segment covering Ser152–Ala169 has biased composition (polar residues). Residues Ser152 to Thr172 form a disordered region. The Phorbol-ester/DAG-type zinc finger occupies Pro215–Cys269. Disordered stretches follow at residues Gly290–Asn339 and Asp414–Asp433. The span at Ser318–Ala331 shows a compositional bias: low complexity. Residues Asp477 to Leu748 form the Protein kinase domain. ATP is bound by residues Ile483–Val491 and Lys503. The Proton acceptor role is filled by Asp600.

It belongs to the protein kinase superfamily. TKL Ser/Thr protein kinase family. Interacts with mek-2. Requires Mg(2+) as cofactor.

The catalysed reaction is L-seryl-[protein] + ATP = O-phospho-L-seryl-[protein] + ADP + H(+). The enzyme catalyses L-threonyl-[protein] + ATP = O-phospho-L-threonyl-[protein] + ADP + H(+). Its function is as follows. Serine/threonine-protein kinase which positively regulates Ras-mediated signaling probably acting at the level of let-60/ras or/and lin-45/raf. Involved in sex myoblast migration. Plays a role in responses to M.nematophilum-mediated bacterial infection by promoting tail swelling and preventing constipation. Functions redundantly with ksr-2 in the Ras-mediated regulation of larval survival, the development of excretory canal and in mpk-1 phosphorylation in somatic cells. In addition, involved in determining vulval precursor cell fate during vulval induction independently of its kinase activity. Plays a role in egg-laying. This Caenorhabditis elegans protein is Kinase suppressor of Ras A.